The following is a 396-amino-acid chain: Tryptophan synthase beta chain (396 aa).

Lys86 is modified (N6-(pyridoxal phosphate)lysine).

This sequence belongs to the TrpB family. As to quaternary structure, tetramer of two alpha and two beta chains. It depends on pyridoxal 5'-phosphate as a cofactor.

The enzyme catalyses (1S,2R)-1-C-(indol-3-yl)glycerol 3-phosphate + L-serine = D-glyceraldehyde 3-phosphate + L-tryptophan + H2O. The protein operates within amino-acid biosynthesis; L-tryptophan biosynthesis; L-tryptophan from chorismate: step 5/5. The beta subunit is responsible for the synthesis of L-tryptophan from indole and L-serine. This chain is Tryptophan synthase beta chain, found in Vibrio vulnificus (strain CMCP6).